The following is a 339-amino-acid chain: Glycerol-3-phosphate dehydrogenase [NAD(P)+] (339 aa).

Serine 13, tryptophan 14, and lysine 108 together coordinate NADPH. Residues lysine 108, glycine 139, and serine 141 each contribute to the sn-glycerol 3-phosphate site. Residue alanine 143 participates in NADPH binding. Positions 194, 247, 257, 258, and 259 each coordinate sn-glycerol 3-phosphate. The Proton acceptor role is filled by lysine 194. Residue arginine 258 coordinates NADPH. NADPH contacts are provided by valine 282 and glutamate 284.

Belongs to the NAD-dependent glycerol-3-phosphate dehydrogenase family.

It localises to the cytoplasm. It catalyses the reaction sn-glycerol 3-phosphate + NAD(+) = dihydroxyacetone phosphate + NADH + H(+). The enzyme catalyses sn-glycerol 3-phosphate + NADP(+) = dihydroxyacetone phosphate + NADPH + H(+). It functions in the pathway membrane lipid metabolism; glycerophospholipid metabolism. In terms of biological role, catalyzes the reduction of the glycolytic intermediate dihydroxyacetone phosphate (DHAP) to sn-glycerol 3-phosphate (G3P), the key precursor for phospholipid synthesis. This Streptococcus equi subsp. equi (strain 4047) protein is Glycerol-3-phosphate dehydrogenase [NAD(P)+].